Reading from the N-terminus, the 374-residue chain is tRNA (guanine(26)-N(2))-dimethyltransferase (374 aa).

The Trm1 methyltransferase domain maps to 1 to 367 (MILKEGEVVF…ATLKNVIEAI (367 aa)). S-adenosyl-L-methionine contacts are provided by R34, R66, D86, D113, and A114.

The protein belongs to the class I-like SAM-binding methyltransferase superfamily. Trm1 family.

The catalysed reaction is guanosine(26) in tRNA + 2 S-adenosyl-L-methionine = N(2)-dimethylguanosine(26) in tRNA + 2 S-adenosyl-L-homocysteine + 2 H(+). Functionally, dimethylates a single guanine residue at position 26 of a number of tRNAs using S-adenosyl-L-methionine as donor of the methyl groups. This Methanocaldococcus jannaschii (strain ATCC 43067 / DSM 2661 / JAL-1 / JCM 10045 / NBRC 100440) (Methanococcus jannaschii) protein is tRNA (guanine(26)-N(2))-dimethyltransferase.